A 376-amino-acid polypeptide reads, in one-letter code: Protein-glutamate methylesterase/protein-glutamine glutaminase (376 aa).

One can recognise a Response regulatory domain in the interval 5-122; it reads KVLIVDDSAL…QHTFEDYTDE (118 aa). The residue at position 56 (D56) is a 4-aspartylphosphate. Residues 185–376 form the CheB-type methylesterase domain; that stretch reads SKPSHKVIAL…PEKILALIKK (192 aa). Residues S197, H223, and D319 contribute to the active site.

The protein belongs to the CheB family. Phosphorylated by CheA. Phosphorylation of the N-terminal regulatory domain activates the methylesterase activity.

It is found in the cytoplasm. The catalysed reaction is [protein]-L-glutamate 5-O-methyl ester + H2O = L-glutamyl-[protein] + methanol + H(+). The enzyme catalyses L-glutaminyl-[protein] + H2O = L-glutamyl-[protein] + NH4(+). Involved in chemotaxis. Part of a chemotaxis signal transduction system that modulates chemotaxis in response to various stimuli. Catalyzes the demethylation of specific methylglutamate residues introduced into the chemoreceptors (methyl-accepting chemotaxis proteins or MCP) by CheR. Also mediates the irreversible deamidation of specific glutamine residues to glutamic acid. In Hydrogenovibrio crunogenus (strain DSM 25203 / XCL-2) (Thiomicrospira crunogena), this protein is Protein-glutamate methylesterase/protein-glutamine glutaminase.